The primary structure comprises 129 residues: Small ribosomal subunit protein uS9 (129 aa).

The protein belongs to the universal ribosomal protein uS9 family.

The polypeptide is Small ribosomal subunit protein uS9 (Helicobacter pylori (strain HPAG1)).